The primary structure comprises 545 residues: Thermosome subunit (545 aa).

The protein belongs to the TCP-1 chaperonin family. In terms of assembly, forms an oligomeric complex of eight-membered rings.

In terms of biological role, molecular chaperone; binds unfolded polypeptides in vitro, and has a weak ATPase activity. This Desulfurococcus sp. (strain SY) protein is Thermosome subunit (ths).